Reading from the N-terminus, the 73-residue chain is Large ribosomal subunit protein bL31 (73 aa).

Belongs to the bacterial ribosomal protein bL31 family. Type A subfamily. As to quaternary structure, part of the 50S ribosomal subunit.

Binds the 23S rRNA. The sequence is that of Large ribosomal subunit protein bL31 from Dinoroseobacter shibae (strain DSM 16493 / NCIMB 14021 / DFL 12).